Here is a 212-residue protein sequence, read N- to C-terminus: Thymidylate kinase (212 aa).

Residue alanine 2 is modified to N-acetylalanine. Residues 16–21 and arginine 97 contribute to the ATP site; that span reads RAGKTT. The tract at residues 133–157 is LID; that stretch reads LQLQLLDAAARGEFGLERYETGTFQ. Residues lysine 182 and arginine 192 each contribute to the ATP site.

This sequence belongs to the thymidylate kinase family. Homodimer. The cofactor is Mg(2+).

It carries out the reaction dTMP + ATP = dTDP + ADP. It participates in pyrimidine metabolism; dTTP biosynthesis. Its function is as follows. Catalyzes the phosphorylation of thymidine monophosphate (dTMP) to thymidine diphosphate (dTDP), the immediate precursor for the DNA building block dTTP, with ATP as the preferred phosphoryl donor in the presence of Mg(2+). The polypeptide is Thymidylate kinase (Dtymk) (Mus musculus (Mouse)).